Consider the following 286-residue polypeptide: Transcription factor egl-46 (286 aa).

A C2H2-type 1; atypical zinc finger spans residues 180-200; sequence CICRLCKVKYEDVFKLAQHKC. 2 C2H2-type zinc fingers span residues 208-230 and 248-271; these read YKCPDCDKVFSCPANLASHRRWH and VSCSTCFNSFPTKKMLKLHSSTCQ.

Belongs to the INSM1 family. Interacts (via C-terminus) with egl-44 (via N-terminus); the interaction is direct; the interaction may regulate transcription. In terms of tissue distribution, expressed in touch cells, HSN cells, ventral cord motor neurons and ciliated ray neurons.

The protein resides in the nucleus. In terms of biological role, transcription factor. Represses expression of genes involved in differentiation of touch receptor neurons (TRN), probably acting as a heterodimer with egl-44, perhaps by occupying similar cis-regulatory elements as an unc-86/mec-3 heterodimer. Plays a role in cell fate specification of neurons, including the hook neuron HOB, the gas-sensing neuron BAG and touch receptor neurons. Plays a role in neuron differentiation by repressing the expression of zag-1 in FLP neurons, probably acting as a heterodimer with egl-44; because zag-1 represses expression of egl-46 and egl-44, together these proteins form a bistable, negative-feedback loop that regulates the choice between neuronal fates. Acts downstream of egl-44 to prevent touch cell differentiation in FLP neurons. Involved in male mating behavior, acting in concert with egl-44, via modulation of expression of polycystins lov-1 and pkd-2, homeodomain protein ceh-26, and neuropeptide-like protein nlp-8. Modulates the expression of a subset of terminal differentiation genes involved in O(2)- and CO(2)-sensing, acting in parallel to ets-5 and egl-13. May act upstream of RFX transcription factor daf-19 to regulate gene expression specifically in the HOB neuron. Plays a role in specifying commissural dendrites of the PVD nociceptive neurons, acting in concert with egl-44. In association with egl-44, regulates cell cycle exit in the neuronal Q cell lineage. This is Transcription factor egl-46 from Caenorhabditis elegans.